We begin with the raw amino-acid sequence, 406 residues long: Probable sphingosine-1-phosphate phosphatase (406 aa).

2 helical membrane-spanning segments follow: residues 66–86 and 92–112; these read ILGE…CVAT and LCVV…TFTL. The segment at 107 to 115 is phosphatase sequence motif I; sequence KNTFTLPRP. The interval 133–136 is phosphatase sequence motif II; that stretch reads PSTH. The active-site Proton donor is histidine 136. The next 2 helical transmembrane spans lie at 138–158 and 162–182; these read ASAF…FPTI and FNIS…SVMF. The interval 183 to 194 is phosphatase sequence motif III; sequence SRLYNGHHTPMD. Histidine 190 acts as the Nucleophile in catalysis. Transmembrane regions (helical) follow at residues 193 to 213, 225 to 245, 254 to 274, 313 to 333, and 374 to 394; these read MDVI…TYQL, TFLF…FFHP, AYPE…SLWL, ILIG…FFFF, and LFVY…FYYL.

Belongs to the type 2 lipid phosphate phosphatase family.

The protein resides in the endoplasmic reticulum membrane. Its function is as follows. Has enzymatic activity against both sphingosine 1 phosphate (S1P) and dihydro-S1P. Regulates intracellular and extracellular S1P levels. The polypeptide is Probable sphingosine-1-phosphate phosphatase (sppA) (Dictyostelium discoideum (Social amoeba)).